We begin with the raw amino-acid sequence, 520 residues long: Cilia- and flagella-associated protein 157 (520 aa).

The segment at 1–22 (MAPKKSVSKAGKELEVKKKGGK) is disordered. Residues 10 to 22 (AGKELEVKKKGGK) are compositionally biased toward basic and acidic residues. Coiled coils occupy residues 33–189 (LAKE…LEKK) and 236–372 (LQMA…QATS). Positions 416–453 (PQKAACPHQESQSHGPPKESRPSIQLPRTGSLLPQLSD) are disordered. The span at 437–453 (PSIQLPRTGSLLPQLSD) shows a compositional bias: polar residues.

Belongs to the CFAP157 family. In terms of assembly, interacts with TUBB and TUBA4A. Interacts with CEP350.

The protein localises to the cytoplasm. It is found in the cytoskeleton. It localises to the cilium basal body. Its function is as follows. Specifically required during spermatogenesis for flagellum morphogenesis and sperm motility. May be required to suppress the formation of supernumerary axonemes and ensure a correct ultrastructure. In Homo sapiens (Human), this protein is Cilia- and flagella-associated protein 157.